The following is a 339-amino-acid chain: DNA-directed RNA polymerase subunit alpha (339 aa).

An alpha N-terminal domain (alpha-NTD) region spans residues 1 to 235 (MVIQKNWQEL…DQLQVFVNFE (235 aa)). The alpha C-terminal domain (alpha-CTD) stretch occupies residues 251–339 (FNPALLKKVD…DLAKRFEEHY (89 aa)).

This sequence belongs to the RNA polymerase alpha chain family. In terms of assembly, homodimer. The RNAP catalytic core consists of 2 alpha, 1 beta, 1 beta' and 1 omega subunit. When a sigma factor is associated with the core the holoenzyme is formed, which can initiate transcription.

The enzyme catalyses RNA(n) + a ribonucleoside 5'-triphosphate = RNA(n+1) + diphosphate. In terms of biological role, DNA-dependent RNA polymerase catalyzes the transcription of DNA into RNA using the four ribonucleoside triphosphates as substrates. This chain is DNA-directed RNA polymerase subunit alpha, found in Methylorubrum extorquens (strain CM4 / NCIMB 13688) (Methylobacterium extorquens).